The sequence spans 195 residues: PRELI domain containing protein 3B (195 aa).

Positions 1–172 constitute a PRELI/MSF1 domain; it reads MKIWTSEHVF…VIHKLNAEIE (172 aa). Residues Ser-46 and Ser-51 each carry the phosphoserine modification.

This sequence belongs to the slowmo family.

This chain is PRELI domain containing protein 3B (Prelid3b), found in Mus musculus (Mouse).